The primary structure comprises 30 residues: Elongation factor 1-delta (30 aa).

It belongs to the EF-1-beta/EF-1-delta family. As to quaternary structure, EF-1 is composed of 4 subunits: alpha, beta (1B-alpha=beta'), delta (1B-beta), and gamma (1B-gamma).

Functionally, EF-1-beta and EF-1-delta stimulate the exchange of GDP bound to EF-1-alpha to GTP. The polypeptide is Elongation factor 1-delta (Populus euphratica (Euphrates poplar)).